We begin with the raw amino-acid sequence, 115 residues long: MARTAATKLALVALVAAMLLVAADAAITCGQVSSALGPCAAYAKGSGTSPSAGCCSGVKRLAGLARSTADKQATCRCLKSVAGAYNAGRAAGIPSRCGVSVPYTISASVDCSKIH.

The N-terminal stretch at 1–25 is a signal peptide; the sequence is MARTAATKLALVALVAAMLLVAADA. Cystine bridges form between Cys29/Cys77, Cys39/Cys54, Cys55/Cys97, and Cys75/Cys111.

It belongs to the plant LTP family. Highly expressed in leaves and coleoptiles. No expression in roots.

In terms of biological role, plant non-specific lipid-transfer proteins transfer phospholipids as well as galactolipids across membranes. May play a role in wax or cutin deposition in the cell walls of expanding epidermal cells and certain secretory tissues. The chain is Non-specific lipid-transfer protein Cw18 (CW18) from Hordeum vulgare (Barley).